Here is a 65-residue protein sequence, read N- to C-terminus: Gallinacin-1 alpha (65 aa).

Residues methionine 1–alanine 19 form the signal peptide. A propeptide spanning residues glycine 20–leucine 25 is cleaved from the precursor. 3 disulfide bridges follow: cysteine 31–cysteine 59, cysteine 38–cysteine 53, and cysteine 43–cysteine 60.

Belongs to the beta-defensin family.

It localises to the secreted. Its subcellular location is the cytoplasmic granule. Its function is as follows. Has bactericidal activity. Potent activity against E.coli ML-35, L.monocytogenes EGD and C.albicans. In Gallus gallus (Chicken), this protein is Gallinacin-1 alpha.